The sequence spans 908 residues: Probable RNA-directed DNA polymerase from transposon X-element (908 aa).

Positions 481–752 (AIVRLQYFPY…NAAKYLGVLL (272 aa)) constitute a Reverse transcriptase domain. Residues 883-908 (RPPRRLNRRQPRDLITRSPLTRVRRS) form a disordered region.

It depends on Mg(2+) as a cofactor. Requires Mn(2+) as cofactor.

The enzyme catalyses DNA(n) + a 2'-deoxyribonucleoside 5'-triphosphate = DNA(n+1) + diphosphate. The sequence is that of Probable RNA-directed DNA polymerase from transposon X-element (X-element\ORF2) from Drosophila melanogaster (Fruit fly).